The primary structure comprises 320 residues: Small ribosomal subunit protein uS15m (320 aa).

Disordered stretches follow at residues 37 to 60 and 214 to 242; these read NISQ…AQQR and QSLE…DTGS.

Belongs to the universal ribosomal protein uS15 family. In terms of assembly, component of the mitochondrial small ribosomal subunit (mt-SSU). Mature N.crassa 74S mitochondrial ribosomes consist of a small (37S) and a large (54S) subunit. The 37S small subunit contains a 16S ribosomal RNA (16S mt-rRNA) and 32 different proteins. The 54S large subunit contains a 23S rRNA (23S mt-rRNA) and 42 different proteins.

Its subcellular location is the mitochondrion. Functionally, component of the mitochondrial ribosome (mitoribosome), a dedicated translation machinery responsible for the synthesis of mitochondrial genome-encoded proteins, including at least some of the essential transmembrane subunits of the mitochondrial respiratory chain. The mitoribosomes are attached to the mitochondrial inner membrane and translation products are cotranslationally integrated into the membrane. The sequence is that of Small ribosomal subunit protein uS15m (mrps28) from Neurospora crassa (strain ATCC 24698 / 74-OR23-1A / CBS 708.71 / DSM 1257 / FGSC 987).